The sequence spans 411 residues: tRNA (uracil(54)-C(5))-methyltransferase (411 aa).

Residues cysteine 62, cysteine 68, cysteine 71, and cysteine 138 each coordinate [4Fe-4S] cluster. Residues glutamine 254, tyrosine 280, threonine 285, 301–302, aspartate 328, and aspartate 342 contribute to the S-adenosyl-L-methionine site; that span reads DS. Cysteine 369 serves as the catalytic Nucleophile. The active-site Proton acceptor is glutamate 402.

Belongs to the class I-like SAM-binding methyltransferase superfamily. RNA M5U methyltransferase family.

The catalysed reaction is uridine(54) in tRNA + S-adenosyl-L-methionine = 5-methyluridine(54) in tRNA + S-adenosyl-L-homocysteine + H(+). Functionally, catalyzes the formation of 5-methyl-uridine at position 54 (m5U54) in tRNA. In Pyrococcus furiosus (strain ATCC 43587 / DSM 3638 / JCM 8422 / Vc1), this protein is tRNA (uracil(54)-C(5))-methyltransferase.